Here is a 267-residue protein sequence, read N- to C-terminus: MRKKTSSNKKNTAKKNNNISLHRKLGLIYKKTILILKIVLIIFICLFAFTKYFASLKSYLKTNIYQTTTELGFKLENVIIEGQQNVDEPTILKVLNAKKGSSIFALNLDEIRNNLKNNRWIKEVYVSRRLPSTIYIKLFEREPIAIWQINNQLFLIDEEGYEISKNIEPFPHLLHVVGEGANIYASKLVNELQKYPALINKTSSAIRCGDRRWDLNLKGGINIKLPAKNFEEALKYIDALNKANKLFNQNYKQLDLRDKNKYYIEKY.

Topologically, residues 1-32 are cytoplasmic; it reads MRKKTSSNKKNTAKKNNNISLHRKLGLIYKKT. The helical transmembrane segment at 33–53 threads the bilayer; that stretch reads ILILKIVLIIFICLFAFTKYF. The Periplasmic portion of the chain corresponds to 54 to 267; the sequence is ASLKSYLKTN…DKNKYYIEKY (214 aa). A POTRA domain is found at 73 to 141; it reads FKLENVIIEG…STIYIKLFER (69 aa).

It belongs to the FtsQ/DivIB family. FtsQ subfamily.

The protein localises to the cell inner membrane. Essential cell division protein. This Rickettsia bellii (strain RML369-C) protein is Cell division protein FtsQ.